Reading from the N-terminus, the 439-residue chain is Putrescine transporter PotE (439 aa).

12 consecutive transmembrane segments (helical) span residues Gly10 to Leu30, Ile40 to Ala60, Thr91 to Gly111, Leu114 to Ile134, Ile152 to Phe172, Ala186 to Leu206, Ile225 to Ile245, Val276 to Ile296, Ala321 to Ile341, Asn354 to Ile374, Val387 to Gly407, and Ala410 to Pro430.

Belongs to the amino acid-polyamine-organocation (APC) superfamily. Basic amino acid/polyamine antiporter (APA) (TC 2.A.3.2) family.

It is found in the cell inner membrane. It carries out the reaction putrescine(in) + H(+)(in) = putrescine(out) + H(+)(out). The catalysed reaction is putrescine(in) + L-ornithine(out) = putrescine(out) + L-ornithine(in). Catalyzes both the uptake and excretion of putrescine. The uptake of putrescine is dependent on the membrane potential and the excretion involves putrescine-ornithine antiporter activity. This is Putrescine transporter PotE from Escherichia coli O6:H1 (strain CFT073 / ATCC 700928 / UPEC).